The primary structure comprises 350 residues: Phenylalanine--tRNA ligase alpha subunit (350 aa).

Residue glutamate 271 coordinates Mg(2+).

It belongs to the class-II aminoacyl-tRNA synthetase family. Phe-tRNA synthetase alpha subunit type 1 subfamily. In terms of assembly, tetramer of two alpha and two beta subunits. Mg(2+) serves as cofactor.

The protein resides in the cytoplasm. It catalyses the reaction tRNA(Phe) + L-phenylalanine + ATP = L-phenylalanyl-tRNA(Phe) + AMP + diphosphate + H(+). In Acidovorax ebreus (strain TPSY) (Diaphorobacter sp. (strain TPSY)), this protein is Phenylalanine--tRNA ligase alpha subunit.